Reading from the N-terminus, the 614-residue chain is Baeyer-Villiger monooxygenase peniC (614 aa).

FAD-binding positions include Glu99, 107-110, Asp119, and Tyr125; that span reads TWHW. Residues 255 to 261, 278 to 279, and 398 to 399 contribute to the NADP(+) site; these read TGASGVQ, RT, and KR.

The protein belongs to the FAD-binding monooxygenase family. FAD is required as a cofactor.

The catalysed reaction is gamma-lactone-2-keto[5.5.5.5]fenestrane + NADPH + O2 + H(+) = penifulvin A + NADP(+) + H2O. It functions in the pathway secondary metabolite biosynthesis; terpenoid biosynthesis. Baeyer-Villiger monooxygenase; part of the gene cluster that mediates the biosynthesis of penifulvin A, a potent insecticidal sesquiterpene that features a [5.5.5.6]dioxafenestrane ring. Within the pathway, peniC is responsible for the final regioselective Baeyer-Villiger oxidation of gamma-lactone-2-keto[5.5.5.5]fenestran between C1 and C2 to form the delta-lactone moiety of penifulvin A. The first step of the pathway is performed by the sesquiterpene cyclase peniA that generates the angular triquinane scaffold silphinene via cyclization of the linear farnesyl pyrophosphate (FPP). The cytochrome P450 monooxygenase peniB and the flavin-dependent monooxygenase peniC then catalyze a series of oxidation reactions to transform silphinene into penifulvin A. This is Baeyer-Villiger monooxygenase peniC from Penicillium patulum (Penicillium griseofulvum).